The following is a 470-amino-acid chain: MEELQGYLERDRFRKQHFLYPLLFKEYIYTFAHDRGLNGSIFYESAEIFGYDNKSSSVLVKRLIIRMYQQNYLIYSVNDSNQNRFVGHNNYLYFHFYSQMILEVFTVIVEIPFLLRLVSSLERKIPKSQNLNLRSIHSIFPFLHEYPNWNSLITPNNSIFLFSKENKRLFRFLHNSYVSECEFVLVFLRKQSSYLRLTSSGAFLERTHFYGKIEHLHLIVVRRNYFQKTLWFFKDPFMHYVRYQGKAILVSKGTHLLMKKWKCHLVNFWQYYFHFWSQPYRIHINQLSNCSFYFLGYLSSVLINPSVVRNQMLENSYLIDTVTKXFDTRVPVISFIGSLAKAKFCTVSGHPISKPIWTDLSDCDIIDRFGRICRNLSNYLSGSSKKQSLYRIKYILRFSCARTLARKHKSMVRAFLQRLGSGLLEEFFTEEEQVVSLIFPKANSFSLHGSHRERIWYLDITCINDLVNYS.

This sequence belongs to the intron maturase 2 family. MatK subfamily.

It localises to the plastid. Its subcellular location is the chloroplast. In terms of biological role, usually encoded in the trnK tRNA gene intron. Probably assists in splicing its own and other chloroplast group II introns. The polypeptide is Maturase K (Nypa fruticans (Nypa palm)).